The primary structure comprises 762 residues: Palmitoyltransferase ZDHHC8 (762 aa).

Over 1 to 13 (MPRSPGTRLKPAK) the chain is Cytoplasmic. The helical transmembrane segment at 14 to 34 (YIPVATAAALLVGSSTLFFVF) threads the bilayer. Residues 35 to 52 (TCPWLTRAVSPAIPVYNG) lie on the Lumenal side of the membrane. Residues 53 to 73 (ILFLFVLANFSMATFMDPGVF) form a helical membrane-spanning segment. Residues 74-148 (PRADEDEDKE…NCIGRRNYRY (75 aa)) lie on the Cytoplasmic side of the membrane. Residues 104–154 (KWCATCHFYRPPRCSHCSVCDNCVEDFDHHCPWVNNCIGRRNYRYFFLFLL) enclose the DHHC domain. The S-palmitoyl cysteine intermediate role is filled by C134. A helical membrane pass occupies residues 149–169 (FFLFLLSLSAHMVGVVAFGLL). Over 170 to 190 (YVLNHSEGLGAAHTTITMAVM) the chain is Lumenal. The chain crosses the membrane as a helical span at residues 191 to 211 (CVAGLFFIPVIGLTGFHVVLV). The Cytoplasmic segment spans residues 212–762 (TRGRTTNEQV…VGGTTYEISV (551 aa)). Disordered stretches follow at residues 289–350 (GLKA…PPTP), 362–423 (GPKT…TTDA), 436–537 (ASRR…SPVR), and 551–574 (ERKD…GDSG). A Phosphoserine modification is found at S335. Pro residues predominate over residues 408–417 (LRPPYPPSPP). The residue at position 439 (R439) is an Omega-N-methylarginine. Polar residues predominate over residues 471–485 (RNGSLSYDSLLNPGS). The segment covering 511–521 (PSDPPRPPPRS) has biased composition (pro residues). Residues 551 to 562 (ERKDREERERLL) are compositionally biased toward basic and acidic residues. Residues S603 and S624 each carry the phosphoserine modification. Over residues 626–644 (SSLSSSMSRAPRTSSSSLQ) the composition is skewed to low complexity. 2 disordered regions span residues 626–684 (SSLS…SYTG) and 707–744 (DHPQ…PARH). Residues S672, S679, S722, and S740 each carry the phosphoserine modification.

The protein belongs to the DHHC palmitoyltransferase family. ERF2/ZDHHC9 subfamily. As to expression, expressed in brain cortex and hippocampus.

The protein resides in the golgi apparatus membrane. The protein localises to the mitochondrion membrane. It catalyses the reaction L-cysteinyl-[protein] + hexadecanoyl-CoA = S-hexadecanoyl-L-cysteinyl-[protein] + CoA. Its function is as follows. Palmitoyltransferase that catalyzes the addition of palmitate onto various protein substrates and therefore functions in several unrelated biological processes. Through the palmitoylation of ABCA1 regulates the localization of the transporter to the plasma membrane and thereby regulates its function in cholesterol and phospholipid efflux. Could also pamitoylate the D(2) dopamine receptor DRD2 and regulate its stability and localization to the plasma membrane. Could also play a role in glutamatergic transmission. The chain is Palmitoyltransferase ZDHHC8 from Mus musculus (Mouse).